Consider the following 114-residue polypeptide: Fructose-bisphosphate aldolase 2 (114 aa).

35–38 (NIDT) is a dihydroxyacetone phosphate binding site.

The protein belongs to the class II fructose-bisphosphate aldolase family. Homodimer. It depends on Zn(2+) as a cofactor.

The catalysed reaction is beta-D-fructose 1,6-bisphosphate = D-glyceraldehyde 3-phosphate + dihydroxyacetone phosphate. The protein operates within carbohydrate biosynthesis; Calvin cycle. It participates in carbohydrate degradation; glycolysis; D-glyceraldehyde 3-phosphate and glycerone phosphate from D-glucose: step 4/4. Its function is as follows. Catalyzes the aldol condensation of dihydroxyacetone phosphate (DHAP or glycerone-phosphate) with glyceraldehyde 3-phosphate (G3P) to form fructose 1,6-bisphosphate (FBP) in gluconeogenesis and the reverse reaction in glycolysis. The polypeptide is Fructose-bisphosphate aldolase 2 (cbbA) (Rhodobacter capsulatus (Rhodopseudomonas capsulata)).